A 277-amino-acid chain; its full sequence is Putative phosphoenolpyruvate synthase regulatory protein (277 aa).

157-164 (GVSRSGKT) is a binding site for ADP.

The protein belongs to the pyruvate, phosphate/water dikinase regulatory protein family. PSRP subfamily.

It carries out the reaction [pyruvate, water dikinase] + ADP = [pyruvate, water dikinase]-phosphate + AMP + H(+). It catalyses the reaction [pyruvate, water dikinase]-phosphate + phosphate + H(+) = [pyruvate, water dikinase] + diphosphate. Bifunctional serine/threonine kinase and phosphorylase involved in the regulation of the phosphoenolpyruvate synthase (PEPS) by catalyzing its phosphorylation/dephosphorylation. The sequence is that of Putative phosphoenolpyruvate synthase regulatory protein from Aromatoleum aromaticum (strain DSM 19018 / LMG 30748 / EbN1) (Azoarcus sp. (strain EbN1)).